Here is a 374-residue protein sequence, read N- to C-terminus: Small ribosomal subunit protein uS4m (374 aa).

Positions 259–323 (GRLENFLMRL…KKLYFFIKSK (65 aa)) constitute an S4 RNA-binding domain.

Belongs to the universal ribosomal protein uS4 family.

Its subcellular location is the mitochondrion. The protein is Small ribosomal subunit protein uS4m (RPS4) of Acanthamoeba castellanii (Amoeba).